A 466-amino-acid chain; its full sequence is Adenosylhomocysteinase (466 aa).

Residues threonine 57, aspartate 132, and glutamate 192 each contribute to the substrate site. 193–195 (TTT) contacts NAD(+). The substrate site is built by lysine 222 and aspartate 226. NAD(+) is bound by residues asparagine 227, 256–261 (GYGDVG), glutamate 279, asparagine 314, 335–337 (IGH), and asparagine 380.

It belongs to the adenosylhomocysteinase family. NAD(+) serves as cofactor.

The protein localises to the cytoplasm. The catalysed reaction is S-adenosyl-L-homocysteine + H2O = L-homocysteine + adenosine. The protein operates within amino-acid biosynthesis; L-homocysteine biosynthesis; L-homocysteine from S-adenosyl-L-homocysteine: step 1/1. In terms of biological role, may play a key role in the regulation of the intracellular concentration of adenosylhomocysteine. The polypeptide is Adenosylhomocysteinase (Chromobacterium violaceum (strain ATCC 12472 / DSM 30191 / JCM 1249 / CCUG 213 / NBRC 12614 / NCIMB 9131 / NCTC 9757 / MK)).